A 322-amino-acid polypeptide reads, in one-letter code: Probable ATP-dependent 6-phosphofructokinase (322 aa).

ATP contacts are provided by residues G11, 72 to 73, and 102 to 105; these read RF and GDGS. D103 contributes to the Mg(2+) binding site. Substrate contacts are provided by residues 125–127, 169–171, E222, K249, and 255–258; these read TID, MGR, and YLQR. D127 serves as the catalytic Proton acceptor.

This sequence belongs to the phosphofructokinase type A (PFKA) family. In terms of assembly, homotetramer. It depends on Mg(2+) as a cofactor.

The protein resides in the cytoplasm. The enzyme catalyses beta-D-fructose 6-phosphate + ATP = beta-D-fructose 1,6-bisphosphate + ADP + H(+). It participates in carbohydrate degradation; glycolysis; D-glyceraldehyde 3-phosphate and glycerone phosphate from D-glucose: step 3/4. Catalyzes the phosphorylation of D-fructose 6-phosphate to fructose 1,6-bisphosphate by ATP, the first committing step of glycolysis. The protein is Probable ATP-dependent 6-phosphofructokinase (pfkA) of Malacoplasma penetrans (strain HF-2) (Mycoplasma penetrans).